The sequence spans 387 residues: Phosphoglycerate kinase (387 aa).

Residues 21–23 (DLN), Arg36, 59–62 (HLGR), Arg113, and Arg146 each bind substrate. ATP is bound by residues Lys197, Glu314, and 340-343 (GGDT).

The protein belongs to the phosphoglycerate kinase family. In terms of assembly, monomer.

It localises to the cytoplasm. The enzyme catalyses (2R)-3-phosphoglycerate + ATP = (2R)-3-phospho-glyceroyl phosphate + ADP. The protein operates within carbohydrate degradation; glycolysis; pyruvate from D-glyceraldehyde 3-phosphate: step 2/5. The chain is Phosphoglycerate kinase (pgk) from Vibrio cholerae serotype O1 (strain ATCC 39541 / Classical Ogawa 395 / O395).